The following is a 310-amino-acid chain: MKIPEGPCRVCHSVKGTRRHFGITACMSCSSFFRRSLNCKFYCPANNSCTILDDQKQFCRSCRYNKCVQSGMRRDCVRKQSYRRQAGRKEAKSPAVSCSNKLSESYEELLNFYVKEANESIARKRQSPLKNAHQVKTSKELLEISKSEDKTSLDAVLHCYGTYILDDEDITTLIRYFKFMNTWIDSAFVYSKSTSNEELLDGNDICKFAYQIDTSIGLSLKNLNLNIFEYAALRAICIWNLKFYETSPKMKSLALEHYKGITGALRQYYENYMSDMDIAVRIGEITMQITTISDLFHDLITLHQKYQIPF.

Residues 5–79 constitute a DNA-binding region (nuclear receptor); that stretch reads EGPCRVCHSV…SGMRRDCVRK (75 aa). NR C4-type zinc fingers lie at residues 8–29 and 43–67; these read CRVC…CMSC and CPAN…YNKC. One can recognise an NR LBD domain in the interval 101 to 310; sequence KLSESYEELL…TLHQKYQIPF (210 aa).

It belongs to the nuclear hormone receptor family.

It localises to the nucleus. Functionally, orphan nuclear receptor. This chain is Nuclear hormone receptor family member nhr-89 (nhr-89), found in Caenorhabditis elegans.